The sequence spans 531 residues: UDP-glucuronosyltransferase 2B13 (531 aa).

Positions 1–24 (MPVKCISVLLLLLQLSCCFSSGSC) are cleaved as a signal peptide. N-linked (GlcNAc...) asparagine glycans are attached at residues Asn69, Asn101, and Asn317. A helical transmembrane segment spans residues 495–511 (VIGFLLACVAITTYLIV).

Belongs to the UDP-glycosyltransferase family.

The protein resides in the microsome membrane. It is found in the endoplasmic reticulum membrane. The catalysed reaction is glucuronate acceptor + UDP-alpha-D-glucuronate = acceptor beta-D-glucuronoside + UDP + H(+). In terms of biological role, UDPGT is of major importance in the conjugation and subsequent elimination of potentially toxic xenobiotics and endogenous compounds. Acts on small phenolic agents such as 2-beta-naphthol and 4-methylumbelliferone as well as bulky phenolic compounds like 2-hydroxy- and 4-hydroxybiphenyl. In contrast to 2B16 it is active toward octylgallate. The sequence is that of UDP-glucuronosyltransferase 2B13 (UGT2B13) from Oryctolagus cuniculus (Rabbit).